The sequence spans 462 residues: Elongation factor 1-alpha 1 (462 aa).

N,N,N-trimethylglycine is present on Gly2. Residues 5–242 enclose the tr-type G domain; that stretch reads KTHINIVVIG…DCILPPTRPT (238 aa). The tract at residues 14–21 is G1; it reads GHVDSGKS. Position 14–21 (14–21) interacts with GTP; that stretch reads GHVDSGKS. Lys36 bears the N6,N6,N6-trimethyllysine; alternate mark. At Lys36 the chain carries N6,N6-dimethyllysine; alternate. Lys36 is modified (N6-methyllysine; alternate). Residue Lys55 is modified to N6,N6-dimethyllysine. Residues 70–74 form a G2 region; the sequence is GITID. Lys79 is modified (N6,N6,N6-trimethyllysine; by EEF1AKMT1). The tract at residues 91-94 is G3; sequence DAPG. Residue 153-156 participates in GTP binding; sequence NKMD. Positions 153-156 are G4; sequence NKMD. Position 165 is an N6,N6,N6-trimethyllysine; alternate; by EEF1AKMT3 (Lys165). Lys165 bears the N6,N6-dimethyllysine; alternate; by EEF1AKMT3 mark. Lys165 carries the N6-acetyllysine; alternate modification. Lys165 bears the N6-methyllysine; alternate; by EEF1AKMT3 mark. Lys172 is modified (N6-acetyllysine). 194-196 is a binding site for GTP; it reads SGW. The segment at 194 to 196 is G5; that stretch reads SGW. Lys273 is subject to N6-acetyllysine. Ser300 is subject to Phosphoserine; by TGFBR1. Residue Glu301 is modified to 5-glutamyl glycerylphosphorylethanolamine. Lys318 is modified (N6,N6,N6-trimethyllysine; by EEF1AKMT2). At Glu374 the chain carries 5-glutamyl glycerylphosphorylethanolamine. Lys385 participates in a covalent cross-link: Glycyl lysine isopeptide (Lys-Gly) (interchain with G-Cter in ubiquitin). Lys392 carries the N6-acetyllysine; alternate modification. Lys392 bears the N6-succinyllysine; alternate mark. Position 432 is a phosphothreonine; by PASK (Thr432). The residue at position 439 (Lys439) is an N6-acetyllysine.

The protein belongs to the TRAFAC class translation factor GTPase superfamily. Classic translation factor GTPase family. EF-Tu/EF-1A subfamily. Found in a nuclear export complex with XPO5, EEF1A1, Ran and aminoacylated tRNA. Interacts with PARP1 and TXK. Interacts with KARS1. May interact with ERGIC2. Interacts with IFIT1 (via TPR repeats 4-7). Interacts with DLC1, facilitating distribution to the membrane periphery and ruffles upon growth factor stimulation. Interacts with ZPR1; the interaction occurs in a epidermal growth factor (EGF)-dependent manner. Interacts with PPP1R16B. Interacts with SPHK1 and SPHK2; both interactions increase SPHK1 and SPHK2 kinase activity. Interacts with guanyl-nucleotide exchange factor EEF1B2. Interacts (via middle-region) with HTATIP2 (via N-terminus); the interaction is direct and competes with EEF1A1 binding to guanyl-nucleotide exchange factor EEF1B2, thereby inhibiting GDP for GTP exchange and reactivation of EEF1A1. Interacts with tRNA. In terms of processing, ISGylated. Phosphorylated by TXK. Phosphorylation by PASK increases translation efficiency. Phosphorylated by ROCK2. Phosphorylation by TGFBR1 inhibits translation elongation. Post-translationally, trimethylated at Lys-79 by EEF1AKMT1. Methylated at Lys-165 by EEF1AKMT3, methylation by EEF1AKMT3 is dynamic as well as inducible by stress conditions, such as ER-stress, and plays a regulatory role on mRNA translation. Trimethylated at Lys-318 by EEF1AKMT2. Mono-, di-, and trimethylated at Lys-36 by EEF1AKMT4; trimethylated form is predominant. Methylation by EEF1AKMT4 contributes to the fine-tuning of translation rates for a subset of tRNAs. Trimethylated at Gly-2 by METTL13. Mono- and dimethylated at Lys-55 by METTL13; dimethylated form is predominant. In terms of processing, ubiquitinated at Lys-385 by RNF14 in response to ribosome collisions (ribosome stalling), leading to its degradation by the proteasome and rescue of stalled ribosomes.

It localises to the cytoplasm. It is found in the nucleus. The protein resides in the nucleolus. The protein localises to the cell membrane. The enzyme catalyses GTP + H2O = GDP + phosphate + H(+). Translation elongation factor that catalyzes the GTP-dependent binding of aminoacyl-tRNA (aa-tRNA) to the A-site of ribosomes during the elongation phase of protein synthesis. Base pairing between the mRNA codon and the aa-tRNA anticodon promotes GTP hydrolysis, releasing the aa-tRNA from EEF1A1 and allowing its accommodation into the ribosome. The growing protein chain is subsequently transferred from the P-site peptidyl tRNA to the A-site aa-tRNA, extending it by one amino acid through ribosome-catalyzed peptide bond formation. Also plays a role in the positive regulation of IFNG transcription in T-helper 1 cells as part of an IFNG promoter-binding complex with TXK and PARP1. Also plays a role in cytoskeleton organization by promoting actin bundling. This chain is Elongation factor 1-alpha 1 (EEF1A1), found in Bos taurus (Bovine).